A 418-amino-acid polypeptide reads, in one-letter code: Glutamyl-tRNA reductase (418 aa).

Substrate-binding positions include 49-52, Ser109, 114-116, and Gln120; these read TCNR and EPQ. Cys50 (nucleophile) is an active-site residue. Position 189-194 (189-194) interacts with NADP(+); it reads GAGETI.

Belongs to the glutamyl-tRNA reductase family. Homodimer.

The enzyme catalyses (S)-4-amino-5-oxopentanoate + tRNA(Glu) + NADP(+) = L-glutamyl-tRNA(Glu) + NADPH + H(+). Its pathway is porphyrin-containing compound metabolism; protoporphyrin-IX biosynthesis; 5-aminolevulinate from L-glutamyl-tRNA(Glu): step 1/2. Its function is as follows. Catalyzes the NADPH-dependent reduction of glutamyl-tRNA(Glu) to glutamate 1-semialdehyde (GSA). The chain is Glutamyl-tRNA reductase from Escherichia coli O157:H7.